The following is a 342-amino-acid chain: Polygalacturonase inhibitor 1 (342 aa).

The N-terminal stretch at methionine 1 to serine 29 is a signal peptide. Cystine bridges form between cysteine 32/cysteine 62 and cysteine 63/cysteine 72. Residue asparagine 64 is glycosylated (N-linked (GlcNAc...) asparagine). LRR repeat units follow at residues asparagine 82–leucine 107, asparagine 108–leucine 132, histidine 133–leucine 156, valine 157–leucine 180, glycine 181–phenylalanine 205, threonine 206–leucine 228, alanine 229–threonine 252, lysine 253–leucine 275, asparagine 276–leucine 299, and glutamine 300–leucine 319. The N-linked (GlcNAc...) asparagine glycan is linked to asparagine 141. Residue asparagine 303 is glycosylated (N-linked (GlcNAc...) asparagine). Intrachain disulfides connect cysteine 310–cysteine 332 and cysteine 334–cysteine 341.

The protein belongs to the polygalacturonase-inhibiting protein family.

The protein localises to the secreted. Its subcellular location is the cell wall. It is found in the membrane. Inhibitor of fungal polygalacturonase. It is an important factor for plant resistance to phytopathogenic fungi. Substrate preference is polygalacturonase (PG) from A.niger &gt;&gt; PG of F.oxysporum, A.solani or B.cinerea. Not active on PG from F.moniliforme. The chain is Polygalacturonase inhibitor 1 (PGIP1) from Phaseolus vulgaris (Kidney bean).